A 176-amino-acid chain; its full sequence is Protein MOTHER of FT and TFL1 homolog 1 (176 aa).

This sequence belongs to the phosphatidylethanolamine-binding protein family.

May form complexes with phosphorylated ligands by interfering with kinases and their effectors. The protein is Protein MOTHER of FT and TFL1 homolog 1 of Oryza sativa subsp. japonica (Rice).